The chain runs to 205 residues: Superoxide dismutase [Fe] (205 aa).

His-33, His-81, Asp-167, and His-171 together coordinate Fe cation.

Belongs to the iron/manganese superoxide dismutase family. Homotetramer. It depends on Fe cation as a cofactor.

The enzyme catalyses 2 superoxide + 2 H(+) = H2O2 + O2. Its function is as follows. Destroys superoxide anion radicals which are normally produced within the cells and which are toxic to biological systems. The polypeptide is Superoxide dismutase [Fe] (sod) (Methanothermobacter thermautotrophicus (strain ATCC 29096 / DSM 1053 / JCM 10044 / NBRC 100330 / Delta H) (Methanobacterium thermoautotrophicum)).